We begin with the raw amino-acid sequence, 467 residues long: Mothers against decapentaplegic homolog 9 (467 aa).

The 125-residue stretch at 16–140 (PAVKRLLGWK…YRRVETPVLP (125 aa)) folds into the MH1 domain. Residues cysteine 68, cysteine 113, cysteine 125, and histidine 130 each coordinate Zn(2+). The tract at residues 174–246 (NATYPDSFQQ…SETQSGQPVD (73 aa)) is disordered. The segment covering 205–220 (SYPHSPGSPSEPESPY) has biased composition (low complexity). The MH2 domain maps to 273 to 467 (WCSVAYYELN…SPHNPISSVS (195 aa)).

The protein belongs to the dwarfin/SMAD family. As to quaternary structure, interaction with the co-SMAD SMAD4. Interacts with PEBP2-alpha subunit. Interacts with RANBP3L. Post-translationally, phosphorylated on serine by BMP (bone morphogenetic proteins) type 1 receptor kinase. Expressed in heart, brain, placenta, lung, skeletal muscle, prostate, testis, ovary and small intestine. Also expressed in fetal brain, lung and kidney.

It localises to the cytoplasm. The protein resides in the nucleus. In terms of biological role, transcriptional modulator activated by BMP (bone morphogenetic proteins) type 1 receptor kinase. SMAD9 is a receptor-regulated SMAD (R-SMAD). In Homo sapiens (Human), this protein is Mothers against decapentaplegic homolog 9 (SMAD9).